We begin with the raw amino-acid sequence, 490 residues long: Acetyl-coenzyme A carboxylase carboxyl transferase subunit beta, chloroplastic (490 aa).

The segment at 184 to 203 (LNSSENEGSSRRTRTKGSDL) is disordered. One can recognise a CoA carboxyltransferase N-terminal domain in the interval 221 to 490 (LWVQCENCYG…PLNQKSSKIK (270 aa)). Residues Cys-225, Cys-228, Cys-244, and Cys-247 each contribute to the Zn(2+) site. The C4-type zinc finger occupies 225–247 (CENCYGLNYKKFLKSKMNICEQC).

The protein belongs to the AccD/PCCB family. In terms of assembly, acetyl-CoA carboxylase is a heterohexamer composed of biotin carboxyl carrier protein, biotin carboxylase and 2 subunits each of ACCase subunit alpha and ACCase plastid-coded subunit beta (accD). Zn(2+) serves as cofactor.

The protein localises to the plastid. The protein resides in the chloroplast stroma. It carries out the reaction N(6)-carboxybiotinyl-L-lysyl-[protein] + acetyl-CoA = N(6)-biotinyl-L-lysyl-[protein] + malonyl-CoA. It participates in lipid metabolism; malonyl-CoA biosynthesis; malonyl-CoA from acetyl-CoA: step 1/1. Its function is as follows. Component of the acetyl coenzyme A carboxylase (ACC) complex. Biotin carboxylase (BC) catalyzes the carboxylation of biotin on its carrier protein (BCCP) and then the CO(2) group is transferred by the transcarboxylase to acetyl-CoA to form malonyl-CoA. The protein is Acetyl-coenzyme A carboxylase carboxyl transferase subunit beta, chloroplastic of Solanum bulbocastanum (Wild potato).